A 398-amino-acid chain; its full sequence is CCA-adding enzyme (398 aa).

2 residues coordinate ATP: Gly32 and Arg35. Gly32 and Arg35 together coordinate CTP. Mg(2+)-binding residues include Asp45 and Asp47. ATP contacts are provided by Arg119, Asp162, Arg165, Arg168, and Arg171. Residues Arg119, Asp162, Arg165, Arg168, and Arg171 each coordinate CTP.

It belongs to the tRNA nucleotidyltransferase/poly(A) polymerase family. Bacterial CCA-adding enzyme type 3 subfamily. Homodimer. The cofactor is Mg(2+).

It catalyses the reaction a tRNA precursor + 2 CTP + ATP = a tRNA with a 3' CCA end + 3 diphosphate. The catalysed reaction is a tRNA with a 3' CCA end + 2 CTP + ATP = a tRNA with a 3' CCACCA end + 3 diphosphate. Functionally, catalyzes the addition and repair of the essential 3'-terminal CCA sequence in tRNAs without using a nucleic acid template. Adds these three nucleotides in the order of C, C, and A to the tRNA nucleotide-73, using CTP and ATP as substrates and producing inorganic pyrophosphate. tRNA 3'-terminal CCA addition is required both for tRNA processing and repair. Also involved in tRNA surveillance by mediating tandem CCA addition to generate a CCACCA at the 3' terminus of unstable tRNAs. While stable tRNAs receive only 3'-terminal CCA, unstable tRNAs are marked with CCACCA and rapidly degraded. The protein is CCA-adding enzyme of Lactococcus lactis subsp. lactis (strain IL1403) (Streptococcus lactis).